Consider the following 25-residue polypeptide: Secapin-1 (25 aa).

A disulfide bridge connects residues C9 and C20.

In terms of tissue distribution, expressed by the venom gland.

Its subcellular location is the secreted. Functionally, serine protease inhibitor which exhibits antifibrinolytic, antielastolytic and antimicrobial activities. Displays antimicrobial activity against bacteria and fungi. Likely functions in the innate immune response to microbial infection and possibly in the venom, as an antifibrinolytic agent. In Apis mellifera (Honeybee), this protein is Secapin-1.